Reading from the N-terminus, the 404-residue chain is Cysteine desulfurase IscS (404 aa).

Pyridoxal 5'-phosphate is bound by residues 75 to 76 (AT), asparagine 155, glutamine 183, and 203 to 205 (SGH). Lysine 206 carries the post-translational modification N6-(pyridoxal phosphate)lysine. Threonine 243 contributes to the pyridoxal 5'-phosphate binding site. Catalysis depends on cysteine 328, which acts as the Cysteine persulfide intermediate. Cysteine 328 serves as a coordination point for [2Fe-2S] cluster.

Belongs to the class-V pyridoxal-phosphate-dependent aminotransferase family. NifS/IscS subfamily. As to quaternary structure, homodimer. Forms a heterotetramer with IscU, interacts with other sulfur acceptors. The cofactor is pyridoxal 5'-phosphate.

Its subcellular location is the cytoplasm. It carries out the reaction (sulfur carrier)-H + L-cysteine = (sulfur carrier)-SH + L-alanine. It functions in the pathway cofactor biosynthesis; iron-sulfur cluster biosynthesis. In terms of biological role, master enzyme that delivers sulfur to a number of partners involved in Fe-S cluster assembly, tRNA modification or cofactor biosynthesis. Catalyzes the removal of elemental sulfur atoms from cysteine to produce alanine. Functions as a sulfur delivery protein for Fe-S cluster synthesis onto IscU, an Fe-S scaffold assembly protein, as well as other S acceptor proteins. The polypeptide is Cysteine desulfurase IscS (Pectobacterium atrosepticum (strain SCRI 1043 / ATCC BAA-672) (Erwinia carotovora subsp. atroseptica)).